We begin with the raw amino-acid sequence, 231 residues long: NADH-ubiquinone oxidoreductase chain 4 (231 aa).

6 consecutive transmembrane segments (helical) span residues 1–21, 34–54, 63–85, 89–111, 128–148, and 156–176; these read PIAG…YGMI, MFMP…LTCL, IAYS…TPWG, AMAL…NTTY, ILPM…AIPP, and FLIM…LGLS.

Belongs to the complex I subunit 4 family.

The protein localises to the mitochondrion membrane. It carries out the reaction a ubiquinone + NADH + 5 H(+)(in) = a ubiquinol + NAD(+) + 4 H(+)(out). In terms of biological role, core subunit of the mitochondrial membrane respiratory chain NADH dehydrogenase (Complex I) that is believed to belong to the minimal assembly required for catalysis. Complex I functions in the transfer of electrons from NADH to the respiratory chain. The immediate electron acceptor for the enzyme is believed to be ubiquinone. This chain is NADH-ubiquinone oxidoreductase chain 4 (MT-ND4), found in Bothriechis schlegelii (Eyelash palm pitviper).